A 784-amino-acid chain; its full sequence is Lon protease (784 aa).

Residues 11–204 (IPVLPLRDVV…YLMAMMESEI (194 aa)) form the Lon N-terminal domain. An ATP-binding site is contributed by 356–363 (GPPGVGKT). The region spanning 592–773 (ENRVGQVTGL…EEVLALALQN (182 aa)) is the Lon proteolytic domain. Catalysis depends on residues Ser679 and Lys722.

Belongs to the peptidase S16 family. As to quaternary structure, homohexamer. Organized in a ring with a central cavity.

It localises to the cytoplasm. The enzyme catalyses Hydrolysis of proteins in presence of ATP.. ATP-dependent serine protease that mediates the selective degradation of mutant and abnormal proteins as well as certain short-lived regulatory proteins. Required for cellular homeostasis and for survival from DNA damage and developmental changes induced by stress. Degrades polypeptides processively to yield small peptide fragments that are 5 to 10 amino acids long. Binds to DNA in a double-stranded, site-specific manner. In Erwinia amylovora (Fire blight bacteria), this protein is Lon protease.